A 151-amino-acid polypeptide reads, in one-letter code: Ribonuclease H (151 aa).

An RNase H type-1 domain is found at S2–D143. Residues D11, E49, D71, and D135 each contribute to the Mg(2+) site.

Belongs to the RNase H family. In terms of assembly, monomer. The cofactor is Mg(2+).

The protein resides in the cytoplasm. The enzyme catalyses Endonucleolytic cleavage to 5'-phosphomonoester.. Functionally, endonuclease that specifically degrades the RNA of RNA-DNA hybrids. In Methylobacillus flagellatus (strain ATCC 51484 / DSM 6875 / VKM B-1610 / KT), this protein is Ribonuclease H.